The following is a 70-amino-acid chain: Small ribosomal subunit protein bS21B (70 aa).

A disordered region spans residues 37–70 (SYEKPTTERKRKKAAAVARLRKQVRRSMPPKKKY). Basic residues predominate over residues 45–70 (RKRKKAAAVARLRKQVRRSMPPKKKY).

It belongs to the bacterial ribosomal protein bS21 family.

The polypeptide is Small ribosomal subunit protein bS21B (Burkholderia pseudomallei (strain K96243)).